A 207-amino-acid chain; its full sequence is Protein GrpE (207 aa).

The interval 1–33 (MTDPNGPKDIPEQSAEAAEPVVSKPYIMPDDPE) is disordered.

This sequence belongs to the GrpE family. In terms of assembly, homodimer.

It localises to the cytoplasm. Functionally, participates actively in the response to hyperosmotic and heat shock by preventing the aggregation of stress-denatured proteins, in association with DnaK and GrpE. It is the nucleotide exchange factor for DnaK and may function as a thermosensor. Unfolded proteins bind initially to DnaJ; upon interaction with the DnaJ-bound protein, DnaK hydrolyzes its bound ATP, resulting in the formation of a stable complex. GrpE releases ADP from DnaK; ATP binding to DnaK triggers the release of the substrate protein, thus completing the reaction cycle. Several rounds of ATP-dependent interactions between DnaJ, DnaK and GrpE are required for fully efficient folding. This is Protein GrpE from Rhodopseudomonas palustris (strain BisA53).